The following is a 497-amino-acid chain: Probable pectinesterase 30 (497 aa).

Positions 1–21 are cleaved as a signal peptide; the sequence is MLVKVFSFFILMIIMVIGVSK. Residues Asn238 and Asn254 are each glycosylated (N-linked (GlcNAc...) asparagine). A substrate-binding site is contributed by Thr263. Asp316 functions as the Proton donor in the catalytic mechanism. Cys330 and Cys350 are disulfide-bonded. Asp337 (nucleophile) is an active-site residue. The N-linked (GlcNAc...) asparagine glycan is linked to Asn385. Arg403 and Trp405 together coordinate substrate.

Belongs to the pectinesterase family. As to expression, expressed in siliques.

It localises to the secreted. The protein resides in the cell wall. It carries out the reaction [(1-&gt;4)-alpha-D-galacturonosyl methyl ester](n) + n H2O = [(1-&gt;4)-alpha-D-galacturonosyl](n) + n methanol + n H(+). Its pathway is glycan metabolism; pectin degradation; 2-dehydro-3-deoxy-D-gluconate from pectin: step 1/5. Acts in the modification of cell walls via demethylesterification of cell wall pectin. The sequence is that of Probable pectinesterase 30 (PME30) from Arabidopsis thaliana (Mouse-ear cress).